The following is a 360-amino-acid chain: uncharacterized protein (360 aa).

Residues 4 to 235 (LSLQHIQKIY…PANMFVSGFI (232 aa)) form the ABC transporter domain. Residue 37–44 (GPSGCGKS) participates in ATP binding.

This sequence belongs to the ABC transporter superfamily.

This is an uncharacterized protein from Escherichia coli (strain K12).